We begin with the raw amino-acid sequence, 99 residues long: NADH-quinone oxidoreductase subunit K 1 (99 aa).

The next 3 membrane-spanning stretches (helical) occupy residues 3–23 (PVNY…GVLV), 28–48 (IVVF…LVTF), and 59–79 (IVAF…LAII).

The protein belongs to the complex I subunit 4L family. As to quaternary structure, NDH-1 is composed of 14 different subunits. Subunits NuoA, H, J, K, L, M, N constitute the membrane sector of the complex.

Its subcellular location is the cell membrane. The catalysed reaction is a quinone + NADH + 5 H(+)(in) = a quinol + NAD(+) + 4 H(+)(out). Its function is as follows. NDH-1 shuttles electrons from NADH, via FMN and iron-sulfur (Fe-S) centers, to quinones in the respiratory chain. The immediate electron acceptor for the enzyme in this species is believed to be a menaquinone. Couples the redox reaction to proton translocation (for every two electrons transferred, four hydrogen ions are translocated across the cytoplasmic membrane), and thus conserves the redox energy in a proton gradient. The polypeptide is NADH-quinone oxidoreductase subunit K 1 (Streptomyces griseus subsp. griseus (strain JCM 4626 / CBS 651.72 / NBRC 13350 / KCC S-0626 / ISP 5235)).